The sequence spans 323 residues: Forkhead transcription factor fkh-6 (323 aa).

Residues 21–122 (KPPYSYVALI…DNGNFKRRRV (102 aa)) constitute a DNA-binding region (fork-head).

The protein resides in the nucleus. Probable transcription factor. Binds to the DNA sequence motif 5'-[TA]TGTT[TG]T[TG][ATG]TT-3'. Regulates sexual dimorphism in the gonad, promoting male gonadal cell fates in chromosomally (XO) male animals, yet plays a role in gonadogenesis in both sexes; probably acts downstream of terminal regulator of sex determination tra-1, to control early gonadogenesis. Positively modulates expression of homeobox protein egl-5, probably acting indirectly, during early gonadal development. The sequence is that of Forkhead transcription factor fkh-6 from Caenorhabditis elegans.